Consider the following 387-residue polypeptide: tRNA N6-adenosine threonylcarbamoyltransferase (387 aa).

Fe cation-binding residues include H112 and H116. Residues 134-138 (LASGG), D167, G180, and N325 contribute to the substrate site. D353 contacts Fe cation.

This sequence belongs to the KAE1 / TsaD family. It depends on Fe(2+) as a cofactor.

Its subcellular location is the cytoplasm. It catalyses the reaction L-threonylcarbamoyladenylate + adenosine(37) in tRNA = N(6)-L-threonylcarbamoyladenosine(37) in tRNA + AMP + H(+). Functionally, required for the formation of a threonylcarbamoyl group on adenosine at position 37 (t(6)A37) in tRNAs that read codons beginning with adenine. Is involved in the transfer of the threonylcarbamoyl moiety of threonylcarbamoyl-AMP (TC-AMP) to the N6 group of A37, together with TsaE and TsaB. TsaD likely plays a direct catalytic role in this reaction. The polypeptide is tRNA N6-adenosine threonylcarbamoyltransferase (Rickettsia prowazekii (strain Madrid E)).